Here is a 158-residue protein sequence, read N- to C-terminus: 2-C-methyl-D-erythritol 2,4-cyclodiphosphate synthase (158 aa).

A divalent metal cation-binding residues include aspartate 9 and histidine 11. Residues 9 to 11 (DVH) and 35 to 36 (HS) contribute to the 4-CDP-2-C-methyl-D-erythritol 2-phosphate site. Histidine 43 is an a divalent metal cation binding site. Residues 57-59 (DIG), 62-66 (FPDTD), 133-136 (TTTE), phenylalanine 140, and arginine 143 contribute to the 4-CDP-2-C-methyl-D-erythritol 2-phosphate site.

It belongs to the IspF family. As to quaternary structure, homotrimer. A divalent metal cation serves as cofactor.

The enzyme catalyses 4-CDP-2-C-methyl-D-erythritol 2-phosphate = 2-C-methyl-D-erythritol 2,4-cyclic diphosphate + CMP. The protein operates within isoprenoid biosynthesis; isopentenyl diphosphate biosynthesis via DXP pathway; isopentenyl diphosphate from 1-deoxy-D-xylulose 5-phosphate: step 4/6. Its function is as follows. Involved in the biosynthesis of isopentenyl diphosphate (IPP) and dimethylallyl diphosphate (DMAPP), two major building blocks of isoprenoid compounds. Catalyzes the conversion of 4-diphosphocytidyl-2-C-methyl-D-erythritol 2-phosphate (CDP-ME2P) to 2-C-methyl-D-erythritol 2,4-cyclodiphosphate (ME-CPP) with a corresponding release of cytidine 5-monophosphate (CMP). In Actinobacillus succinogenes (strain ATCC 55618 / DSM 22257 / CCUG 43843 / 130Z), this protein is 2-C-methyl-D-erythritol 2,4-cyclodiphosphate synthase.